A 393-amino-acid chain; its full sequence is Acetate kinase (393 aa).

Mg(2+) is bound at residue Asn7. Lys14 provides a ligand contact to ATP. Arg87 is a binding site for substrate. Residue Asp144 is the Proton donor/acceptor of the active site. ATP is bound by residues 202–206, 277–279, and 326–330; these read HIGNG, DLR, and GVGEN. Residue Glu380 participates in Mg(2+) binding.

The protein belongs to the acetokinase family. Homodimer. The cofactor is Mg(2+). It depends on Mn(2+) as a cofactor.

The protein localises to the cytoplasm. It carries out the reaction acetate + ATP = acetyl phosphate + ADP. It participates in metabolic intermediate biosynthesis; acetyl-CoA biosynthesis; acetyl-CoA from acetate: step 1/2. Its function is as follows. Catalyzes the formation of acetyl phosphate from acetate and ATP. Can also catalyze the reverse reaction. The protein is Acetate kinase of Mycoplasmopsis pulmonis (strain UAB CTIP) (Mycoplasma pulmonis).